Here is a 57-residue protein sequence, read N- to C-terminus: MAVPKRRMSRANTRSRRAQWKAEAPGLVTVSVAGQQRKVPRRLLKAARLGLVDLDKR.

The segment covering 1-19 has biased composition (basic residues); it reads MAVPKRRMSRANTRSRRAQ. The disordered stretch occupies residues 1–20; it reads MAVPKRRMSRANTRSRRAQW.

It belongs to the bacterial ribosomal protein bL32 family.

This Mycolicibacterium smegmatis (strain ATCC 700084 / mc(2)155) (Mycobacterium smegmatis) protein is Large ribosomal subunit protein bL32.